The chain runs to 445 residues: Phosphoglucosamine mutase (445 aa).

Residue serine 102 is the Phosphoserine intermediate of the active site. Mg(2+) contacts are provided by serine 102, aspartate 241, aspartate 243, and aspartate 245. Residue serine 102 is modified to Phosphoserine.

The protein belongs to the phosphohexose mutase family. Mg(2+) is required as a cofactor. Activated by phosphorylation.

The enzyme catalyses alpha-D-glucosamine 1-phosphate = D-glucosamine 6-phosphate. Functionally, catalyzes the conversion of glucosamine-6-phosphate to glucosamine-1-phosphate. The polypeptide is Phosphoglucosamine mutase (Haemophilus influenzae (strain PittEE)).